A 158-amino-acid polypeptide reads, in one-letter code: NAD(P)H-quinone oxidoreductase subunit N, organellar chromatophore (158 aa).

It belongs to the complex I NdhN subunit family. As to quaternary structure, NDH-1 can be composed of about 15 different subunits; different subcomplexes with different compositions have been identified which probably have different functions.

The protein resides in the plastid. It localises to the organellar chromatophore thylakoid membrane. The enzyme catalyses a plastoquinone + NADH + (n+1) H(+)(in) = a plastoquinol + NAD(+) + n H(+)(out). It catalyses the reaction a plastoquinone + NADPH + (n+1) H(+)(in) = a plastoquinol + NADP(+) + n H(+)(out). In terms of biological role, NDH-1 shuttles electrons from an unknown electron donor, via FMN and iron-sulfur (Fe-S) centers, to quinones in the respiratory and/or the photosynthetic chain. The immediate electron acceptor for the enzyme in this species is believed to be plastoquinone. Couples the redox reaction to proton translocation, and thus conserves the redox energy in a proton gradient. The sequence is that of NAD(P)H-quinone oxidoreductase subunit N, organellar chromatophore from Paulinella chromatophora.